Reading from the N-terminus, the 78-residue chain is Pigment-dispersing hormone 1 peptides (78 aa).

The first 22 residues, 1–22 (MRSSVIVAVLVVVALAALLTQG), serve as a signal peptide directing secretion. A75 is modified (alanine amide).

The protein belongs to the arthropod PDH family. As to expression, eyestalk sinus gland.

The protein resides in the secreted. Functionally, the pigment-dispersing hormone causes the migration of the distal retinal pigment into the proximal end of the pigment chromatophore cells and thus decreases the amount of light entering the retinulas. May also function as a neurotransmitter and/or neuromodulator. The protein is Pigment-dispersing hormone 1 peptides (PDH1) of Callinectes sapidus (Blue crab).